The chain runs to 302 residues: Ribosomal protein L11 methyltransferase (302 aa).

S-adenosyl-L-methionine is bound by residues T155, G176, D198, and N239.

Belongs to the methyltransferase superfamily. PrmA family.

The protein localises to the cytoplasm. It catalyses the reaction L-lysyl-[protein] + 3 S-adenosyl-L-methionine = N(6),N(6),N(6)-trimethyl-L-lysyl-[protein] + 3 S-adenosyl-L-homocysteine + 3 H(+). Methylates ribosomal protein L11. This Caldicellulosiruptor saccharolyticus (strain ATCC 43494 / DSM 8903 / Tp8T 6331) protein is Ribosomal protein L11 methyltransferase.